Consider the following 196-residue polypeptide: Translation machinery-associated protein 22 (196 aa).

One can recognise an SUI1 domain in the interval 111–182; that stretch reads IIIKRIERNK…EAKEYIEKLL (72 aa).

This sequence belongs to the DENR family. In terms of assembly, interacts with the 40S ribosomal subunit.

Its subcellular location is the cytoplasm. This is Translation machinery-associated protein 22 (TMA22) from Lodderomyces elongisporus (strain ATCC 11503 / CBS 2605 / JCM 1781 / NBRC 1676 / NRRL YB-4239) (Yeast).